The chain runs to 551 residues: HTH-type transcriptional regulator SgrR (551 aa).

Residues 1–116 enclose the HTH marR-type domain; it reads MPSARLQQQF…LVSHLGRSFR (116 aa). The H-T-H motif DNA-binding region spans 26–49; the sequence is LNELAALLSCSRRHMRTLLNTMQD. The segment at 163–492 is solute-binding; the sequence is ELEADIAHHW…IDWQADAARW (330 aa).

Activates the small RNA gene sgrS under glucose-phosphate stress conditions as well as yfdZ. Represses its own transcription under both stress and non-stress conditions. Might act as a sensor of the intracellular accumulation of phosphoglucose by binding these molecules in its C-terminal solute-binding domain. In Shigella flexneri serotype 5b (strain 8401), this protein is HTH-type transcriptional regulator SgrR.